Consider the following 222-residue polypeptide: 7-cyano-7-deazaguanine synthase (222 aa).

7–17 (LSGGMDSAVAT) serves as a coordination point for ATP. C188, C196, C199, and C202 together coordinate Zn(2+).

This sequence belongs to the QueC family. Zn(2+) serves as cofactor.

The catalysed reaction is 7-carboxy-7-deazaguanine + NH4(+) + ATP = 7-cyano-7-deazaguanine + ADP + phosphate + H2O + H(+). Its pathway is purine metabolism; 7-cyano-7-deazaguanine biosynthesis. Its function is as follows. Catalyzes the ATP-dependent conversion of 7-carboxy-7-deazaguanine (CDG) to 7-cyano-7-deazaguanine (preQ(0)). This chain is 7-cyano-7-deazaguanine synthase, found in Methanothermobacter thermautotrophicus (strain ATCC 29096 / DSM 1053 / JCM 10044 / NBRC 100330 / Delta H) (Methanobacterium thermoautotrophicum).